Here is a 472-residue protein sequence, read N- to C-terminus: MRRNRRGSPARPAARFVRPAIPSALSVALLVCTPGLATADPQTDTIAALIADVAKANQRLQDLSDEVQAEQESVNKAMVDVETARDNAAAAEDDLEVSQRAVKDANAAIAAAQHRFDTFAAATYMNGPSVSYLSASSPDEIIATVTAAKTLSASSQAVMANLQRARTERVNTESAARLAKQKADKAAADAKASQDAAVAALTETRRKFDEQREEVQRLAAERDAAQARLQAARLVAWSSEGGQGAPPFRMWDPGSGPAGGRAWDGLWDPTLPMIPSANIPGDPIAVVNQVLGISATSAQVTANMGRKFLEQLGILQPTDTGITNAPAGSAQGRIPRVYGRQASEYVIRRGMSQIGVPYSWGGGNAAGPSKGIDSGAGTVGFDCSGLVLYSFAGVGIKLPHYSGSQYNLGRKIPSSQMRRGDVIFYGPNGSQHVTIYLGNGQMLEAPDVGLKVRVAPVRTAGMTPYVVRYIEY.

The segment at residues 1 to 39 (MRRNRRGSPARPAARFVRPAIPSALSVALLVCTPGLATA) is a signal peptide (tat-type signal). One can recognise a NlpC/P60 domain in the interval 340–472 (RQASEYVIRR…TPYVVRYIEY (133 aa)). The active-site Nucleophile is the cysteine 383. The active-site Proton acceptor is histidine 432. Glutamate 444 is an active-site residue.

The protein belongs to the peptidase C40 family. As to quaternary structure, monomer. Interacts with RpfB and PBP1A (ponA1) via residues 448-472 of RipA, interacts with RpfE. Interacts with the chaperone MoxR1. RipA-MoxR1 interaction in the cytoplasm leads to proper folding of RipA, resulting in its secretion. Also interacts with Mce2B. In terms of processing, exported by the Tat system. The position of the signal peptide cleavage has not been experimentally proven.

Its subcellular location is the secreted. MoxR1-mediated folding is critical for secretion via the TAT system. The synergistic effects on peptidoglycan degradation of RipA plus RpfB are inhibited by addition of PBP1A (ponA1). Peptidoglycan endopeptidase that cleaves the bond between D-glutamate and meso-diaminopimelate. Binds and degrades high-molecular weight peptidoglycan from a number of Actinobacteria; activity is increased in the presence of RpfB and inhibited by PBP1A (ponA1). Required for normal separation of daughter cells after cell division and for cell wall integrity. Required for host cell invasion and intracellular survival in host macrophages. The sequence is that of Peptidoglycan endopeptidase RipA (ripA) from Mycobacterium tuberculosis (strain ATCC 25618 / H37Rv).